The primary structure comprises 208 residues: Protein DEHYDRATION-INDUCED 19 homolog 6 (208 aa).

The disordered stretch occupies residues 151–190; that stretch reads VDSPRRSEADAEGHGSSSSDDQKRREQGVMDDASKEELEE. Composition is skewed to basic and acidic residues over residues 153-163 and 170-190; these read SPRRSEADAEG and DDQKRREQGVMDDASKEELEE.

This sequence belongs to the Di19 family.

In Oryza sativa subsp. japonica (Rice), this protein is Protein DEHYDRATION-INDUCED 19 homolog 6 (DI19-6).